The following is a 270-amino-acid chain: Formamidopyrimidine-DNA glycosylase (270 aa).

The active-site Schiff-base intermediate with DNA is Pro2. Glu3 acts as the Proton donor in catalysis. Catalysis depends on Lys58, which acts as the Proton donor; for beta-elimination activity. DNA contacts are provided by His91, Arg110, and Lys151. The segment at 236–270 (FVYGRGGQPCKVCGTTLREIKLGQRASVYCPKCQR) adopts an FPG-type zinc-finger fold. Arg260 serves as the catalytic Proton donor; for delta-elimination activity.

It belongs to the FPG family. In terms of assembly, monomer. Requires Zn(2+) as cofactor.

The enzyme catalyses Hydrolysis of DNA containing ring-opened 7-methylguanine residues, releasing 2,6-diamino-4-hydroxy-5-(N-methyl)formamidopyrimidine.. The catalysed reaction is 2'-deoxyribonucleotide-(2'-deoxyribose 5'-phosphate)-2'-deoxyribonucleotide-DNA = a 3'-end 2'-deoxyribonucleotide-(2,3-dehydro-2,3-deoxyribose 5'-phosphate)-DNA + a 5'-end 5'-phospho-2'-deoxyribonucleoside-DNA + H(+). Functionally, involved in base excision repair of DNA damaged by oxidation or by mutagenic agents. Acts as a DNA glycosylase that recognizes and removes damaged bases. Has a preference for oxidized purines, such as 7,8-dihydro-8-oxoguanine (8-oxoG). Has AP (apurinic/apyrimidinic) lyase activity and introduces nicks in the DNA strand. Cleaves the DNA backbone by beta-delta elimination to generate a single-strand break at the site of the removed base with both 3'- and 5'-phosphates. This is Formamidopyrimidine-DNA glycosylase from Pseudomonas savastanoi pv. phaseolicola (strain 1448A / Race 6) (Pseudomonas syringae pv. phaseolicola (strain 1448A / Race 6)).